We begin with the raw amino-acid sequence, 187 residues long: Ribosome-recycling factor (187 aa).

The protein belongs to the RRF family.

Its subcellular location is the cytoplasm. Functionally, responsible for the release of ribosomes from messenger RNA at the termination of protein biosynthesis. May increase the efficiency of translation by recycling ribosomes from one round of translation to another. This Rhodopseudomonas palustris (strain BisB18) protein is Ribosome-recycling factor.